A 105-amino-acid chain; its full sequence is Small ribosomal subunit protein uS10 (105 aa).

It belongs to the universal ribosomal protein uS10 family. Part of the 30S ribosomal subunit.

Functionally, involved in the binding of tRNA to the ribosomes. This Arthrospira platensis (Spirulina platensis) protein is Small ribosomal subunit protein uS10.